We begin with the raw amino-acid sequence, 200 residues long: Small ribosomal subunit protein uS4 (200 aa).

The S4 RNA-binding domain occupies 92–155 (SRLDAVVYSL…QKLNIIVESV (64 aa)).

It belongs to the universal ribosomal protein uS4 family. Part of the 30S ribosomal subunit. Contacts protein S5. The interaction surface between S4 and S5 is involved in control of translational fidelity.

In terms of biological role, one of the primary rRNA binding proteins, it binds directly to 16S rRNA where it nucleates assembly of the body of the 30S subunit. With S5 and S12 plays an important role in translational accuracy. In Staphylococcus aureus (strain JH9), this protein is Small ribosomal subunit protein uS4.